The following is a 199-amino-acid chain: MSNVWFTSDLHIGHAKVAEDRDWAGPDHDLHLAELWDEQVGKEDVVWILGDISSGGTRAQLDALGWLLNRPGRKRLILGNHDRPHPMYRDAPRLSRLYWNVLDYMSTAARLRVPLDGGGHTNVLLSHFPYVGDHTAEQRFTQWRLRDEGLILLHGHTHSRIIRSTMTNPRQIHVGLDAWHDLVPMDEVREMVNDIEEGL.

The sequence is that of Gene 66 protein (66) from Mycobacterium (Mycobacteriophage D29).